Here is a 637-residue protein sequence, read N- to C-terminus: uncharacterized protein (637 aa).

The zn(2)-C6 fungal-type DNA-binding region spans 7-34 (CDLCRLKKIKCSRGQPRCQTCTLFQADC). The C2H2-type; degenerate zinc finger occupies 304 to 327 (SLCRTLCGQACLMAQQLNLHRKQS).

It localises to the nucleus. This is an uncharacterized protein from Schizosaccharomyces pombe (strain 972 / ATCC 24843) (Fission yeast).